Reading from the N-terminus, the 430-residue chain is Serine/threonine transporter SstT (430 aa).

The next 9 helical transmembrane spans lie at 24-44, 47-67, 82-102, 144-164, 186-206, 223-243, 294-314, 320-340, and 361-381; these read IIVG…VTWI, FGTL…FVLV, FGTV…VAVL, AIID…GLAM, VIRW…FTNV, LLVG…IFIF, IPLG…IMAM, LGIQ…ALGA, and FGIS…IGVI.

It belongs to the dicarboxylate/amino acid:cation symporter (DAACS) (TC 2.A.23) family.

Its subcellular location is the cell membrane. It catalyses the reaction L-serine(in) + Na(+)(in) = L-serine(out) + Na(+)(out). It carries out the reaction L-threonine(in) + Na(+)(in) = L-threonine(out) + Na(+)(out). In terms of biological role, involved in the import of serine and threonine into the cell, with the concomitant import of sodium (symport system). The sequence is that of Serine/threonine transporter SstT from Bifidobacterium adolescentis (strain ATCC 15703 / DSM 20083 / NCTC 11814 / E194a).